The primary structure comprises 438 residues: Histidinol dehydrogenase (438 aa).

Residues Y135, Q193, and N216 each coordinate NAD(+). Residues S243, Q265, and H268 each coordinate substrate. Q265 and H268 together coordinate Zn(2+). Catalysis depends on proton acceptor residues E332 and H333. Residues H333, D366, E420, and H425 each contribute to the substrate site. D366 lines the Zn(2+) pocket. Zn(2+) is bound at residue H425.

This sequence belongs to the histidinol dehydrogenase family. Requires Zn(2+) as cofactor.

The enzyme catalyses L-histidinol + 2 NAD(+) + H2O = L-histidine + 2 NADH + 3 H(+). It participates in amino-acid biosynthesis; L-histidine biosynthesis; L-histidine from 5-phospho-alpha-D-ribose 1-diphosphate: step 9/9. In terms of biological role, catalyzes the sequential NAD-dependent oxidations of L-histidinol to L-histidinaldehyde and then to L-histidine. In Shewanella oneidensis (strain ATCC 700550 / JCM 31522 / CIP 106686 / LMG 19005 / NCIMB 14063 / MR-1), this protein is Histidinol dehydrogenase.